The following is a 678-amino-acid chain: MDSLTSILLLLELQHEFSGLKVPGRLAKFGPPFRPSEEFADAEDSPVMKMIAQSYIFTPTLPGVNKAPPEFWSDKLQPLLETIGKHNLSDSYDHGRVSKRKMVGFAVVVVLHVLSKGLLGKATPLSEDRKPTSNNEEEDDADEAKSSNADSSTDSVQKSLANVNMDDANGPERLHYPSVKRLREAYSLLVYGDGLQQALDRISVSEDVDSWDEPLRSVIENIRYTIAVILHFSFVTVDAIPESPHLVSNRKGPEGVVERLYNRIPWFLTRQVLRVGNAGLLMSGLTRLFLMKPLSWFGESRNLLQTMLAGIFNADLEHSESTMVETDAEFEDDAKWETMRKALQWFTQLSRTEQDDVRSQSINKELNITIAILEAYEAQQTETTETEGVDKEDSDKASSVQGNEDEVPDTASETEHSEIEDFHFDPYSEKGVHIAMRYFDAALTHRDRECLIHDLCDNDQLNDVVREFMNAFYNIIYEAHQAADFSQAIYDFQYFLWDVIQLSKAGAPLVKFINLVERYQSCFVRFIHRLVVNAPDLCGEWCDWYRHCLKQFSVEVKTPDAVDVAHKALNTLDEETKHQVLEEIGDYVKELDEESKKAIENKDSTSEWLLHLYNFFGSAIITPTTAHGVPQPQLPNCGMKLNRTKEKLLTPFRNLLMEQLNELQAKNQETPSEMTSTE.

Disordered stretches follow at residues 123–156 and 381–417; these read TPLS…TDSV and TETT…TEHS.

It localises to the cytoplasm. This is an uncharacterized protein from Schizosaccharomyces pombe (strain 972 / ATCC 24843) (Fission yeast).